Consider the following 82-residue polypeptide: UPF0298 protein SMU_1670c (82 aa).

Belongs to the UPF0298 family.

The protein resides in the cytoplasm. In Streptococcus mutans serotype c (strain ATCC 700610 / UA159), this protein is UPF0298 protein SMU_1670c.